A 142-amino-acid polypeptide reads, in one-letter code: Putative phosphatidylglycerol/phosphatidylinositol transfer protein 2 (142 aa).

Positions 1–20 (MKFYLYLSILLILLTSTSFG) are cleaved as a signal peptide.

This sequence belongs to the NPC2 family. In terms of assembly, monomer.

In terms of biological role, catalyzes the intermembrane transfer of phosphatidylglycerol and phosphatidylinositol. The chain is Putative phosphatidylglycerol/phosphatidylinositol transfer protein 2 from Dictyostelium discoideum (Social amoeba).